The chain runs to 287 residues: 1-acyl-sn-glycerol-3-phosphate acyltransferase alpha (287 aa).

A signal peptide spans 1–26; that stretch reads MELWPGAGTLLLLLFLLLLLLLPTLW. The Lumenal portion of the chain corresponds to 27–37; that stretch reads FCSPSAKYFFK. A helical transmembrane segment spans residues 38–58; that stretch reads MAFYNGWILFLAVLAIPVCAV. Residues 59 to 127 lie on the Cytoplasmic side of the membrane; the sequence is RGRNVENMKI…PGHCVPIAKR (69 aa). Residues 104 to 109 carry the HXXXXD motif motif; sequence HQSSLD. Residues 128-148 traverse the membrane as a helical segment; the sequence is ELLWAGSAGLACWLAGVIFID. At 149–192 the chain is on the lumenal side; it reads RKRTGDAISVMSEVAQTLLTQDVRVWVFPEGTRNHNGSMLPFKR. The EGTR motif motif lies at 178–181; that stretch reads EGTR.

It belongs to the 1-acyl-sn-glycerol-3-phosphate acyltransferase family.

The protein localises to the endoplasmic reticulum membrane. It carries out the reaction a 1-acyl-sn-glycero-3-phosphate + an acyl-CoA = a 1,2-diacyl-sn-glycero-3-phosphate + CoA. The enzyme catalyses 1-(9Z-octadecenoyl)-sn-glycero-3-phosphate + (9Z)-octadecenoyl-CoA = 1,2-di-(9Z-octadecenoyl)-sn-glycero-3-phosphate + CoA. The catalysed reaction is 1-(9Z-octadecenoyl)-sn-glycero-3-phosphate + hexadecanoyl-CoA = 1-(9Z)-octadecenoyl-2-hexadecanoyl-sn-glycero-3-phosphate + CoA. It catalyses the reaction heptadecanoyl-CoA + 1-(9Z-octadecenoyl)-sn-glycero-3-phosphate = 1-(9Z)-octadecenoyl-2-heptadecanoyl-sn-glycero-3-phosphate + CoA. It carries out the reaction 1-(9Z-octadecenoyl)-sn-glycero-3-phosphate + octadecanoyl-CoA = 1-(9Z-octadecenoyl)-2-octadecanoyl-sn-glycero-3-phosphate + CoA. The enzyme catalyses 1-(9Z-octadecenoyl)-sn-glycero-3-phosphate + (9Z,12Z)-octadecadienoyl-CoA = 1-(9Z)-octadecenoyl-2-(9Z,12Z)-octadecadienoyl-sn-glycero-3-phosphate + CoA. The catalysed reaction is 1-(9Z-octadecenoyl)-sn-glycero-3-phosphate + tetradecanoyl-CoA = 1-(9Z)-octadecenoyl-2-tetradecanoyl-sn-glycero-3-phosphate + CoA. It catalyses the reaction pentadecanoyl-CoA + 1-(9Z-octadecenoyl)-sn-glycero-3-phosphate = 1-(9Z)-octadecenoyl-2-pentadecanoyl-sn-glycero-3-phosphate + CoA. It carries out the reaction 1-hexadecanoyl-sn-glycero-3-phosphate + (9Z)-octadecenoyl-CoA = 1-hexadecanoyl-2-(9Z-octadecenoyl)-sn-glycero-3-phosphate + CoA. The enzyme catalyses 1-(9Z,12Z,15Z)-octadecatrienoyl-sn-glycero-3-phosphate + (9Z)-octadecenoyl-CoA = 1-(9Z,12Z,15Z)-octadecatrienoyl-2-(9Z)-octadecenoyl-sn-glycero-3-phosphate + CoA. The catalysed reaction is 1-(6Z,9Z,12Z-octadecatrienoyl)-sn-glycero-3-phosphate + (9Z)-octadecenoyl-CoA = (6Z,9Z,12Z)-octadecatrienoyl-2-(9Z)-octadecenoyl-sn-glycero-3-phosphate + CoA. It catalyses the reaction 1-eicosanoyl-sn-glycero-3-phosphate + (9Z)-octadecenoyl-CoA = 1-eicosanoyl-2-(9Z)-octadecenoyl-sn-glycero-3-phosphate + CoA. It carries out the reaction 1-tetradecanoyl-sn-glycerol 3-phosphate + (9Z)-octadecenoyl-CoA = 1-tetradecanoyl-2-(9Z)-octadecenoyl-sn-glycero-3-phosphate + CoA. The enzyme catalyses 1-(9Z-octadecenoyl)-sn-glycero-3-phosphate + (5Z,8Z,11Z,14Z)-eicosatetraenoyl-CoA = 1-(9Z)-octadecenoyl-2-(5Z,8Z,11Z,14Z)-eicosatetraenoyl-sn-glycero-3-phosphate + CoA. The catalysed reaction is 1-(9Z-octadecenoyl)-sn-glycero-3-phosphate + dodecanoyl-CoA = 1-(9Z)-octadecenoyl-2-dodecanoyl-sn-glycero-3-phosphate + CoA. It catalyses the reaction (6Z)-octadecenoyl-CoA + 1-(9Z-octadecenoyl)-sn-glycero-3-phosphate = 1-(9Z)-octadecenoyl-2-(6Z)-octadecenoyl-sn-glycero-3-phosphate + CoA. It carries out the reaction (11Z)-octadecenoyl-CoA + 1-(9Z-octadecenoyl)-sn-glycero-3-phosphate = 1-(9Z)-octadecenoyl-2-(11Z)-octadecenoyl-sn-glycero-3-phosphate + CoA. The enzyme catalyses (9Z)-hexadecenoyl-CoA + 1-(9Z-octadecenoyl)-sn-glycero-3-phosphate = 1-(9Z-octadecenoyl)-2-(9Z-hexadecenoyl)-sn-glycero-3-phosphate + CoA. Its pathway is phospholipid metabolism; CDP-diacylglycerol biosynthesis; CDP-diacylglycerol from sn-glycerol 3-phosphate: step 2/3. Functionally, converts 1-acyl-sn-glycerol-3-phosphate (lysophosphatidic acid or LPA) into 1,2-diacyl-sn-glycerol-3-phosphate (phosphatidic acid or PA) by incorporating an acyl moiety at the sn-2 position of the glycerol backbone. The polypeptide is 1-acyl-sn-glycerol-3-phosphate acyltransferase alpha (AGPAT1) (Ovis aries (Sheep)).